Reading from the N-terminus, the 335-residue chain is Phospho-N-acetylmuramoyl-pentapeptide-transferase (335 aa).

Helical transmembrane passes span 3–23, 53–73, 78–98, 118–138, 143–163, 175–195, 200–220, 226–246, 251–271, and 314–334; these read LTLIAGLISLLLTALIMPHFI, GGTVFLLVASFVSFLFAILFF, SMGLITGILAIVLIYGFIGFL, LSLQIVGGLIFYFLHVVPSGI, VFGFPVHLGLLYIFFVLFWVV, IDGLASISVVISLLTYSVIAI, YDVLLLCGIMIGALLGFFIFN, VFMGDVGSLALGAMLAAISIA, WTLLVIGLVYVFETSSVMLQV, and VDAFLWSVGAVSSLIVLAILY.

This sequence belongs to the glycosyltransferase 4 family. MraY subfamily. Requires Mg(2+) as cofactor.

The protein resides in the cell membrane. The catalysed reaction is UDP-N-acetyl-alpha-D-muramoyl-L-alanyl-gamma-D-glutamyl-L-lysyl-D-alanyl-D-alanine + di-trans,octa-cis-undecaprenyl phosphate = Mur2Ac(oyl-L-Ala-gamma-D-Glu-L-Lys-D-Ala-D-Ala)-di-trans,octa-cis-undecaprenyl diphosphate + UMP. It participates in cell wall biogenesis; peptidoglycan biosynthesis. Functionally, catalyzes the initial step of the lipid cycle reactions in the biosynthesis of the cell wall peptidoglycan: transfers peptidoglycan precursor phospho-MurNAc-pentapeptide from UDP-MurNAc-pentapeptide onto the lipid carrier undecaprenyl phosphate, yielding undecaprenyl-pyrophosphoryl-MurNAc-pentapeptide, known as lipid I. In Streptococcus uberis (strain ATCC BAA-854 / 0140J), this protein is Phospho-N-acetylmuramoyl-pentapeptide-transferase.